The following is a 267-amino-acid chain: Phosphatidylglycerol--prolipoprotein diacylglyceryl transferase (267 aa).

The next 7 helical transmembrane spans lie at 17-37 (LNIRWYGLMYILGFVAAWLLA), 56-76 (LVTYSVFGVILGGRLGYTLFY), 91-111 (IWNGGMSFHGGLLGVIIAIWL), 120-140 (LFEVGDFTAPLVAPGLLAGRL), 173-193 (QLYEAALEGVALFIILWLFSA), 199-219 (MAVSGMFLLLYGSFRFFVEFF), and 236-256 (MGQILCLPMILGGLVLVGFAM). Arg-139 is a binding site for a 1,2-diacyl-sn-glycero-3-phospho-(1'-sn-glycerol).

Belongs to the Lgt family.

It is found in the cell inner membrane. The catalysed reaction is L-cysteinyl-[prolipoprotein] + a 1,2-diacyl-sn-glycero-3-phospho-(1'-sn-glycerol) = an S-1,2-diacyl-sn-glyceryl-L-cysteinyl-[prolipoprotein] + sn-glycerol 1-phosphate + H(+). The protein operates within protein modification; lipoprotein biosynthesis (diacylglyceryl transfer). Functionally, catalyzes the transfer of the diacylglyceryl group from phosphatidylglycerol to the sulfhydryl group of the N-terminal cysteine of a prolipoprotein, the first step in the formation of mature lipoproteins. In Oleidesulfovibrio alaskensis (strain ATCC BAA-1058 / DSM 17464 / G20) (Desulfovibrio alaskensis), this protein is Phosphatidylglycerol--prolipoprotein diacylglyceryl transferase.